Here is a 163-residue protein sequence, read N- to C-terminus: GTP-dependent dephospho-CoA kinase (163 aa).

Residues Asp38, Val39, Asp57, Glu115, and Asp138 each coordinate GTP.

The protein belongs to the GTP-dependent DPCK family.

The catalysed reaction is 3'-dephospho-CoA + GTP = GDP + CoA + H(+). It participates in cofactor biosynthesis; coenzyme A biosynthesis. Functionally, catalyzes the GTP-dependent phosphorylation of the 3'-hydroxyl group of dephosphocoenzyme A to form coenzyme A (CoA). The protein is GTP-dependent dephospho-CoA kinase of Methanothermobacter thermautotrophicus (strain ATCC 29096 / DSM 1053 / JCM 10044 / NBRC 100330 / Delta H) (Methanobacterium thermoautotrophicum).